The primary structure comprises 294 residues: uncharacterized protein (294 aa).

Residues 13-151 (QCSQIRPYLY…LIDLEQKLRG (139 aa)) form the Tyrosine-protein phosphatase domain. C95 serves as the catalytic Phosphocysteine intermediate. A disordered region spans residues 234–294 (PTLLVPSSSS…WRLSFHKDVV (61 aa)).

Belongs to the protein-tyrosine phosphatase family. Non-receptor class dual specificity subfamily.

This is an uncharacterized protein from Caenorhabditis elegans.